A 71-amino-acid chain; its full sequence is ATP synthase subunit c (71 aa).

The next 2 helical transmembrane spans lie at 5–25 (VLAAGIAVLSGIGAGVGIGIA) and 46–66 (FFILGAALCETTAIYGLVMAF).

The protein belongs to the ATPase C chain family. In terms of assembly, F-type ATPases have 2 components, F(1) - the catalytic core - and F(0) - the membrane proton channel. F(1) has five subunits: alpha(3), beta(3), gamma(1), delta(1), epsilon(1). F(0) has three main subunits: a(1), b(2) and c(10-14). The alpha and beta chains form an alternating ring which encloses part of the gamma chain. F(1) is attached to F(0) by a central stalk formed by the gamma and epsilon chains, while a peripheral stalk is formed by the delta and b chains.

It localises to the cell membrane. F(1)F(0) ATP synthase produces ATP from ADP in the presence of a proton or sodium gradient. F-type ATPases consist of two structural domains, F(1) containing the extramembraneous catalytic core and F(0) containing the membrane proton channel, linked together by a central stalk and a peripheral stalk. During catalysis, ATP synthesis in the catalytic domain of F(1) is coupled via a rotary mechanism of the central stalk subunits to proton translocation. Its function is as follows. Key component of the F(0) channel; it plays a direct role in translocation across the membrane. A homomeric c-ring of between 10-14 subunits forms the central stalk rotor element with the F(1) delta and epsilon subunits. In Clostridium beijerinckii (strain ATCC 51743 / NCIMB 8052) (Clostridium acetobutylicum), this protein is ATP synthase subunit c.